A 1216-amino-acid polypeptide reads, in one-letter code: Probable phospholipid-transporting ATPase 4 (1216 aa).

Residues methionine 1 to phenylalanine 74 are Cytoplasmic-facing. A helical membrane pass occupies residues proline 75–leucine 96. The Extracellular portion of the chain corresponds to serine 97–proline 100. Residues leucine 101–lysine 123 traverse the membrane as a helical segment. Residues glutamate 124–isoleucine 305 lie on the Cytoplasmic side of the membrane. Residues isoleucine 306–glutamate 327 form a helical membrane-spanning segment. Topologically, residues threonine 328–histidine 359 are extracellular. The chain crosses the membrane as a helical span at residues leucine 360–valine 377. Topologically, residues serine 378–alanine 922 are cytoplasmic. The active-site 4-aspartylphosphate intermediate is the aspartate 425. Lysine 605 is covalently cross-linked (Glycyl lysine isopeptide (Lys-Gly) (interchain with G-Cter in ubiquitin)). The Mg(2+) site is built by aspartate 867 and aspartate 871. A helical transmembrane segment spans residues glutamine 923–phenylalanine 942. The Extracellular portion of the chain corresponds to glutamate 943–aspartate 956. A helical transmembrane segment spans residues tyrosine 957–valine 976. At phenylalanine 977 to arginine 1006 the chain is on the cytoplasmic side. A helical membrane pass occupies residues isoleucine 1007–isoleucine 1029. The Extracellular portion of the chain corresponds to tyrosine 1030–aspartate 1042. A helical membrane pass occupies residues methionine 1043 to threonine 1065. Over valine 1066 to tryptophan 1071 the chain is Cytoplasmic. Residues isoleucine 1072 to glycine 1092 traverse the membrane as a helical segment. Over methionine 1093–isoleucine 1109 the chain is Extracellular. A helical transmembrane segment spans residues leucine 1110–histidine 1134. Topologically, residues isoleucine 1135 to valine 1216 are cytoplasmic. The segment at leucine 1195–valine 1216 is disordered. Positions lysine 1198–valine 1216 are enriched in polar residues.

Belongs to the cation transport ATPase (P-type) (TC 3.A.3) family. Type IV subfamily.

It is found in the membrane. It carries out the reaction ATP + H2O + phospholipidSide 1 = ADP + phosphate + phospholipidSide 2.. In terms of biological role, involved in transport of phospholipids. The sequence is that of Probable phospholipid-transporting ATPase 4 from Arabidopsis thaliana (Mouse-ear cress).